A 415-amino-acid chain; its full sequence is Calcium/calmodulin-dependent serine/threonine-protein kinase (415 aa).

The Protein kinase domain occupies 12–308; the sequence is YEISEILGRG…AQELLDHPWV (297 aa). ATP-binding positions include 18–26 and K46; that span reads LGRGGFSVV. D173 functions as the Proton acceptor in the catalytic mechanism. Residues 318-328 are calmodulin-binding; the sequence is MDAEIVSRLQS.

This sequence belongs to the protein kinase superfamily. CAMK Ser/Thr protein kinase family. CaMK subfamily.

It catalyses the reaction L-seryl-[protein] + ATP = O-phospho-L-seryl-[protein] + ADP + H(+). The enzyme catalyses L-threonyl-[protein] + ATP = O-phospho-L-threonyl-[protein] + ADP + H(+). Its function is as follows. May be involved in signal transduction processes. The chain is Calcium/calmodulin-dependent serine/threonine-protein kinase from Malus domestica (Apple).